We begin with the raw amino-acid sequence, 610 residues long: UvrABC system protein C (610 aa).

The region spanning 16-94 is the GIY-YIG domain; that stretch reads SQPGVYRMYD…IKLYQPRYNV (79 aa). The UVR domain maps to 204–239; it reads DQVINQLVSRMEQASQNLAFEEAARLRDQIQAVRRV.

The protein belongs to the UvrC family. As to quaternary structure, interacts with UvrB in an incision complex.

The protein localises to the cytoplasm. Its function is as follows. The UvrABC repair system catalyzes the recognition and processing of DNA lesions. UvrC both incises the 5' and 3' sides of the lesion. The N-terminal half is responsible for the 3' incision and the C-terminal half is responsible for the 5' incision. The polypeptide is UvrABC system protein C (Cronobacter sakazakii (strain ATCC BAA-894) (Enterobacter sakazakii)).